Reading from the N-terminus, the 1097-residue chain is DNA-directed RNA polymerase subunit beta (1097 aa).

A disordered region spans residues aspartate 1073–aspartate 1097. Polar residues predominate over residues arginine 1077–threonine 1091.

It belongs to the RNA polymerase beta chain family. As to quaternary structure, in cyanobacteria the RNAP catalytic core is composed of 2 alpha, 1 beta, 1 beta', 1 gamma and 1 omega subunit. When a sigma factor is associated with the core the holoenzyme is formed, which can initiate transcription.

The enzyme catalyses RNA(n) + a ribonucleoside 5'-triphosphate = RNA(n+1) + diphosphate. Functionally, DNA-dependent RNA polymerase catalyzes the transcription of DNA into RNA using the four ribonucleoside triphosphates as substrates. The protein is DNA-directed RNA polymerase subunit beta of Prochlorococcus marinus (strain MIT 9312).